The following is a 392-amino-acid chain: 8-amino-7-oxononanoate synthase (392 aa).

Residue Arg-19 participates in substrate binding. A pyridoxal 5'-phosphate-binding site is contributed by 106–107; the sequence is GY. His-131 provides a ligand contact to substrate. The pyridoxal 5'-phosphate site is built by Ser-176, His-204, and Thr-233. At Lys-236 the chain carries N6-(pyridoxal phosphate)lysine. Position 350 (Thr-350) interacts with substrate.

Belongs to the class-II pyridoxal-phosphate-dependent aminotransferase family. BioF subfamily. Homodimer. It depends on pyridoxal 5'-phosphate as a cofactor.

It carries out the reaction 6-carboxyhexanoyl-[ACP] + L-alanine + H(+) = (8S)-8-amino-7-oxononanoate + holo-[ACP] + CO2. It participates in cofactor biosynthesis; biotin biosynthesis. Catalyzes the decarboxylative condensation of pimeloyl-[acyl-carrier protein] and L-alanine to produce 8-amino-7-oxononanoate (AON), [acyl-carrier protein], and carbon dioxide. In Pseudomonas fluorescens (strain ATCC BAA-477 / NRRL B-23932 / Pf-5), this protein is 8-amino-7-oxononanoate synthase.